We begin with the raw amino-acid sequence, 197 residues long: Probable GTP-binding protein EngB (197 aa).

The region spanning 24 to 197 is the EngB-type G domain; that stretch reads DIPEIALAGR…WDAILEKVNK (174 aa). GTP-binding positions include 32 to 39, 59 to 63, 77 to 80, 144 to 147, and 176 to 178; these read GRSNVGKS, GKTQL, DVPG, TKAD, and FSS. Mg(2+) contacts are provided by serine 39 and threonine 61.

The protein belongs to the TRAFAC class TrmE-Era-EngA-EngB-Septin-like GTPase superfamily. EngB GTPase family. Mg(2+) is required as a cofactor.

Functionally, necessary for normal cell division and for the maintenance of normal septation. This Streptococcus gordonii (strain Challis / ATCC 35105 / BCRC 15272 / CH1 / DL1 / V288) protein is Probable GTP-binding protein EngB.